The primary structure comprises 218 residues: Large ribosomal subunit protein uL3 (218 aa).

Belongs to the universal ribosomal protein uL3 family. In terms of assembly, part of the 50S ribosomal subunit. Forms a cluster with proteins L14 and L19.

In terms of biological role, one of the primary rRNA binding proteins, it binds directly near the 3'-end of the 23S rRNA, where it nucleates assembly of the 50S subunit. In Corynebacterium glutamicum (strain R), this protein is Large ribosomal subunit protein uL3.